Here is a 752-residue protein sequence, read N- to C-terminus: MEGPEIQFSEAVIDNGRFGKRVIRFETGRLAKQAAGAAMVYIDEDTALLSATTAGKHPREGFDFFPLTVDVEERMYAAGRIPGSFFRREGRPSTEAILACRLMDRPLRPAFVKGLRNEVQIVVTVLAINPDELYDVVAINASSMSTQLSGLPFSGPIGGVRVALVADENGSQWVAFPKHSQLENSVFNMVVAGRVAGDDVAIMMVEAEATDNSWNLIKEQGATAPTEEVVSEGLEAAKPFIKALCDAQADLAARAAKPTVEFPVFLDYQDDVYAAVEAAAADKLAAVFQIADKQERDTASDALKDEVTSSLAGQFEGREKELSAAFRSVTKHVVRQRILKDQIRIDGRGLTDIRQLTAEVEVLPRVHGSAIFERGETQIMGVTTLNMLKMEQQIDSLSPVTRKRYMHNYNFPPYSTGETGRVGSPKRREIGHGALAERALVPVLPSREEFPYAIRQVSEALGSNGSTSMGSVCASTLSMLNAGVPLKAAVAGIAMGLVSDQVDGQTRYAALTDILGAEDAFGDMDFKVAGTSEFVTAIQLDTKLDGIPASVLAAALKQAREARLHILEVINSAIDTPDELSEFAPRVIAVKIPVDKIGEVIGPKGKMINQIQEDTGADISIEDDGTVYIGATNGPSADAARSAINAIANPQVPEIGERYLGTVVKTTTFGAFVSLTPGKDGLLHISELRKLANGKRVDNVDDVVSVGQKVQVEITKIDDRGKLSLSPVVAEEEGAEGAERAHATEPAEGAEI.

Residues Asp519 and Asp525 each coordinate Mg(2+). The KH domain maps to 585–644 (PRVIAVKIPVDKIGEVIGPKGKMINQIQEDTGADISIEDDGTVYIGATNGPSADAARSAI). Residues 656-728 (GERYLGTVVK…DRGKLSLSPV (73 aa)) enclose the S1 motif domain. Positions 727–752 (PVVAEEEGAEGAERAHATEPAEGAEI) are disordered.

This sequence belongs to the polyribonucleotide nucleotidyltransferase family. Requires Mg(2+) as cofactor.

Its subcellular location is the cytoplasm. It catalyses the reaction RNA(n+1) + phosphate = RNA(n) + a ribonucleoside 5'-diphosphate. Involved in mRNA degradation. Catalyzes the phosphorolysis of single-stranded polyribonucleotides processively in the 3'- to 5'-direction. The sequence is that of Polyribonucleotide nucleotidyltransferase from Pseudarthrobacter chlorophenolicus (strain ATCC 700700 / DSM 12829 / CIP 107037 / JCM 12360 / KCTC 9906 / NCIMB 13794 / A6) (Arthrobacter chlorophenolicus).